The chain runs to 145 residues: Large ribosomal subunit protein uL15 (145 aa).

The disordered stretch occupies residues 1-52 (MRLNTLSPAAGSKRVKHRPGRGIGSGLGKTGGRGVKGQTSRSGGGKVRNGFE). 2 stretches are compositionally biased toward gly residues: residues 21–35 (RGIG…GRGV) and 42–52 (SGGGKVRNGFE).

Belongs to the universal ribosomal protein uL15 family. In terms of assembly, part of the 50S ribosomal subunit.

Its function is as follows. Binds to the 23S rRNA. In Aeromonas hydrophila subsp. hydrophila (strain ATCC 7966 / DSM 30187 / BCRC 13018 / CCUG 14551 / JCM 1027 / KCTC 2358 / NCIMB 9240 / NCTC 8049), this protein is Large ribosomal subunit protein uL15.